A 294-amino-acid chain; its full sequence is NAD kinase (294 aa).

Residue D72 is the Proton acceptor of the active site. Residues 72–73, 146–147, R157, R174, D176, 187–192, and Q247 contribute to the NAD(+) site; these read DG, ND, and TAYSLS.

The protein belongs to the NAD kinase family. A divalent metal cation is required as a cofactor.

Its subcellular location is the cytoplasm. It catalyses the reaction NAD(+) + ATP = ADP + NADP(+) + H(+). Its function is as follows. Involved in the regulation of the intracellular balance of NAD and NADP, and is a key enzyme in the biosynthesis of NADP. Catalyzes specifically the phosphorylation on 2'-hydroxyl of the adenosine moiety of NAD to yield NADP. This is NAD kinase from Marinobacter nauticus (strain ATCC 700491 / DSM 11845 / VT8) (Marinobacter aquaeolei).